The following is a 128-amino-acid chain: Disintegrin lebein-2-alpha (128 aa).

Residues 1 to 20 form the signal peptide; sequence MIQVLLVTICLAVFPFHGSS. A propeptide spanning residues 21–46 is cleaved from the precursor; that stretch reads IILESGNVNDYEVVYPKKVTLLPTGA. The region spanning 47–111 is the Disintegrin domain; sequence MNSANPCCDP…SDCPRNPWKS (65 aa). Intrachain disulfides connect Cys-53/Cys-76, Cys-67/Cys-73, Cys-72/Cys-97, and Cys-85/Cys-104. The Cell attachment site; atypical (MLD) motif lies at 89–91; it reads MLD. A propeptide spanning residues 112 to 128 is cleaved from the precursor; that stretch reads EEDEMKWSATAKGSVLM.

This sequence belongs to the disintegrin family. Dimeric disintegrin subfamily. In terms of assembly, heterodimer with subunit beta; disulfide-linked. Expressed by the venom gland.

It is found in the secreted. Functionally, inhibits ADP-induced human platelet aggregation. Antagonist of alpha-IIb/beta-3 (ITGA2B/ITGB3). Also avidly binds to the laminin-binding beta-1 integrins (alpha-3/beta-1 (ITGA3/ITGB1), alpha-6/beta-1 (ITGA6/ITGB1), and alpha-7/beta-1 (ITGA7/ITGB1)) in an RGD-independent manner. The sequence is that of Disintegrin lebein-2-alpha from Macrovipera lebetinus (Levantine viper).